Consider the following 1030-residue polypeptide: Teashirt homolog 2 (1030 aa).

Residues 1-120 (MPRRKQQAPK…THPKLPSEPH (120 aa)) form a disordered region. A coiled-coil region spans residues 11–42 (RAAGYAQEEVLKEEEEIKEEEEEEEDSGSVAQ). Positions 21-37 (LKEEEEIKEEEEEEEDS) are enriched in acidic residues. Polar residues-rich tracts occupy residues 39 to 49 (SVAQHQSSNDT) and 66 to 95 (SCQNSPGSHLSNQDAENESLLSDASDQVSD). The segment covering 103–120 (DVSDKKANTHPKLPSEPH) has biased composition (basic and acidic residues). Lysine 189 participates in a covalent cross-link: Glycyl lysine isopeptide (Lys-Gly) (interchain with G-Cter in SUMO2). 2 consecutive C2H2-type zinc fingers follow at residues 216–240 (FRCRQCSAAYDTLVELTVHMNETGH) and 276–300 (LKCMFCGDSFDSLQDLSVHMIKTKH). Residues 240 to 266 (HYQDDNRKKDKLRPTSYSKPRKRAFQD) are disordered. Residues lysine 307 and lysine 316 each participate in a glycyl lysine isopeptide (Lys-Gly) (interchain with G-Cter in SUMO2) cross-link. The disordered stretch occupies residues 328–348 (VNRPCSPDSTTGSLADSFSSQ). Polar residues predominate over residues 334–348 (PDSTTGSLADSFSSQ). The C2H2-type 3; atypical zinc finger occupies 381 to 405 (LKCMECGSSHDTLQQLTTHMMVTGH). Lysine 418 participates in a covalent cross-link: Glycyl lysine isopeptide (Lys-Gly) (interchain with G-Cter in SUMO2). The span at 432-459 (SLSETPNSESLAPKPSSNSPSECTASTT) shows a compositional bias: polar residues. Residues 432 to 488 (SLSETPNSESLAPKPSSNSPSECTASTTELKKESKKEKGEGIEDEQGVKSEDYEDSL) are disordered. Basic and acidic residues predominate over residues 460-482 (ELKKESKKEKGEGIEDEQGVKSE). Glycyl lysine isopeptide (Lys-Gly) (interchain with G-Cter in SUMO2) cross-links involve residues lysine 462, lysine 480, lysine 497, and lysine 601. 2 stretches are compositionally biased toward basic and acidic residues: residues 608–623 (DEVVKQCGKESPHEEA) and 633–664 (SFSKIEPPSESRKAEPCPLKEEEKPQKEKPEP). 3 disordered regions span residues 608 to 687 (DEVV…LPSI), 703 to 726 (KATEPLRSPSCSSPNSSTSPVFHK), and 759 to 784 (QPIDLTKSKSKRAESSQAQSCTSPPQ). Lysine 652 is covalently cross-linked (Glycyl lysine isopeptide (Lys-Gly) (interchain with G-Cter in SUMO2)). Low complexity predominate over residues 710–722 (SPSCSSPNSSTSP). Positions 773–783 (SSQAQSCTSPP) are enriched in polar residues. Residues lysine 796 and lysine 816 each participate in a glycyl lysine isopeptide (Lys-Gly) (interchain with G-Cter in SUMO2) cross-link. Residues 837-907 (RKGRQSNWNP…NVKYQLRKTG (71 aa)) constitute a DNA-binding region (homeobox). The C2H2-type 4 zinc-finger motif lies at 922–944 (FYCSDCASQFRTPSTYISHLESH). Lysine 962 participates in a covalent cross-link: Glycyl lysine isopeptide (Lys-Gly) (interchain with G-Cter in SUMO2). Disordered regions lie at residues 965–987 (QEISRVSSAQRSPETIAGEEDTD) and 1009–1030 (LSKTHSKSPEHHSQFVADVDEE). The segment covering 968 to 977 (SRVSSAQRSP) has biased composition (polar residues). The residue at position 976 (serine 976) is a Phosphoserine. A C2H2-type 5 zinc finger spans residues 990–1013 (FKCKLCRRTFVSKHAVKLHLSKTH).

It belongs to the teashirt C2H2-type zinc-finger protein family. Interacts (via homeobox domain) with APBB1 (via PID domain 1). Post-translationally, sumoylated.

Its subcellular location is the nucleus. Probable transcriptional regulator involved in developmental processes. May act as a transcriptional repressor (Potential). The sequence is that of Teashirt homolog 2 (Tshz2) from Mus musculus (Mouse).